The chain runs to 363 residues: UDP-N-acetylglucosamine--N-acetylmuramyl-(pentapeptide) pyrophosphoryl-undecaprenol N-acetylglucosamine transferase (363 aa).

Residues 14 to 16 (TGG), N122, R163, S190, and Q285 each bind UDP-N-acetyl-alpha-D-glucosamine.

It belongs to the glycosyltransferase 28 family. MurG subfamily.

It is found in the cell inner membrane. It catalyses the reaction di-trans,octa-cis-undecaprenyl diphospho-N-acetyl-alpha-D-muramoyl-L-alanyl-D-glutamyl-meso-2,6-diaminopimeloyl-D-alanyl-D-alanine + UDP-N-acetyl-alpha-D-glucosamine = di-trans,octa-cis-undecaprenyl diphospho-[N-acetyl-alpha-D-glucosaminyl-(1-&gt;4)]-N-acetyl-alpha-D-muramoyl-L-alanyl-D-glutamyl-meso-2,6-diaminopimeloyl-D-alanyl-D-alanine + UDP + H(+). Its pathway is cell wall biogenesis; peptidoglycan biosynthesis. Functionally, cell wall formation. Catalyzes the transfer of a GlcNAc subunit on undecaprenyl-pyrophosphoryl-MurNAc-pentapeptide (lipid intermediate I) to form undecaprenyl-pyrophosphoryl-MurNAc-(pentapeptide)GlcNAc (lipid intermediate II). This chain is UDP-N-acetylglucosamine--N-acetylmuramyl-(pentapeptide) pyrophosphoryl-undecaprenol N-acetylglucosamine transferase, found in Prochlorococcus marinus (strain AS9601).